Here is a 572-residue protein sequence, read N- to C-terminus: Flagellin B (572 aa).

It belongs to the bacterial flagellin family. In terms of assembly, heteromer of flaA and flaB.

Its subcellular location is the secreted. It localises to the bacterial flagellum. Functionally, flagellin is the subunit protein which polymerizes to form the filaments of bacterial flagella. This Campylobacter jejuni subsp. jejuni serotype O:2 (strain ATCC 700819 / NCTC 11168) protein is Flagellin B (flaB).